Consider the following 601-residue polypeptide: Phosphomethylpyrimidine synthase (601 aa).

Substrate is bound by residues asparagine 224, methionine 253, tyrosine 282, histidine 318, 338 to 340, 379 to 382, and glutamate 418; these read SRG and DGLR. Histidine 422 contributes to the Zn(2+) binding site. Tyrosine 445 lines the substrate pocket. Histidine 486 is a binding site for Zn(2+). [4Fe-4S] cluster is bound by residues cysteine 566, cysteine 569, and cysteine 574.

This sequence belongs to the ThiC family. In terms of assembly, homodimer. The cofactor is [4Fe-4S] cluster.

The catalysed reaction is 5-amino-1-(5-phospho-beta-D-ribosyl)imidazole + S-adenosyl-L-methionine = 4-amino-2-methyl-5-(phosphooxymethyl)pyrimidine + CO + 5'-deoxyadenosine + formate + L-methionine + 3 H(+). It functions in the pathway cofactor biosynthesis; thiamine diphosphate biosynthesis. Catalyzes the synthesis of the hydroxymethylpyrimidine phosphate (HMP-P) moiety of thiamine from aminoimidazole ribotide (AIR) in a radical S-adenosyl-L-methionine (SAM)-dependent reaction. This Xylella fastidiosa (strain 9a5c) protein is Phosphomethylpyrimidine synthase.